A 936-amino-acid polypeptide reads, in one-letter code: General transcription factor II-I repeat domain-containing protein 2 (936 aa).

The stretch at 95–189 (EACPGEAQLL…FLGAESQLGG (95 aa)) is one GTF2I-like 1 repeat. Residues 199–222 (PTVPPNDSYGPVSVKTEPMEDSGT) are disordered. One copy of the GTF2I-like 2 repeat lies at 319-413 (LSGLEKIKQL…LPGLELSNVG (95 aa)).

The protein belongs to the TFII-I family. Ubiquitous.

The protein resides in the nucleus. In Mus musculus (Mouse), this protein is General transcription factor II-I repeat domain-containing protein 2 (Gtf2ird2).